The primary structure comprises 334 residues: Heat-inducible transcription repressor HrcA (334 aa).

The protein belongs to the HrcA family.

Functionally, negative regulator of class I heat shock genes (grpE-dnaK-dnaJ and groELS operons). Prevents heat-shock induction of these operons. The polypeptide is Heat-inducible transcription repressor HrcA (Bordetella bronchiseptica (strain ATCC BAA-588 / NCTC 13252 / RB50) (Alcaligenes bronchisepticus)).